The chain runs to 674 residues: RNA polymerase sigma factor RpoD (674 aa).

The interval 214 to 252 (AEGAAPAARRPASDEPEYDADGNPISRIDEEEDDDDSSN) is disordered. Residues 440–510 (MVEANLRLVI…TRSIADQART (71 aa)) are sigma-70 factor domain-2. The short motif at 464–467 (DLIQ) is the Interaction with polymerase core subunit RpoC element. A sigma-70 factor domain-3 region spans residues 519–595 (ETINKLVRTG…DKNAILPLDS (77 aa)). The sigma-70 factor domain-4 stretch occupies residues 608-661 (VLASLTPREERVLRMRFGIGMNTDHTLEEVGQQFSVTRERIRQIEAKALRKLKH). The H-T-H motif DNA-binding region spans 634–653 (LEEVGQQFSVTRERIRQIEA).

It belongs to the sigma-70 factor family. RpoD/SigA subfamily. In terms of assembly, interacts transiently with the RNA polymerase catalytic core.

Its subcellular location is the cytoplasm. Functionally, sigma factors are initiation factors that promote the attachment of RNA polymerase to specific initiation sites and are then released. This sigma factor is the primary sigma factor during exponential growth. This Rhodobacter capsulatus (strain ATCC BAA-309 / NBRC 16581 / SB1003) protein is RNA polymerase sigma factor RpoD.